We begin with the raw amino-acid sequence, 239 residues long: MRTLFIGDLHLSADRLDITQAFNRFLDTELDDADALYILGDLFEVWVGDDLAAPFALELARKLNQVSQRLPIYFIHGNRDFMLGKQFADVAGMQMLPEVTCLDLYGVNTVILHGDSLCTLDKAYQRFRKLRSFAFARWLYSCLPKKKRQAIANKIRSNSQSSNQQKSYVIMDVEPSAVDALFAQSHCKQMIHGHTHRPAIHEFTNGCKRIVVGDWYEQGSVLVVSSDGVDLKSLPFDAS.

Residues Asp8, His10, Asp41, Asn78, and His113 each coordinate Mn(2+). 78–79 contributes to the substrate binding site; the sequence is NR. Asp121, Ser159, Asn163, Lys166, and His194 together coordinate substrate. Residues His194 and His196 each contribute to the Mn(2+) site.

This sequence belongs to the LpxH family. Mn(2+) serves as cofactor.

The protein localises to the cell inner membrane. It catalyses the reaction UDP-2-N,3-O-bis[(3R)-3-hydroxytetradecanoyl]-alpha-D-glucosamine + H2O = 2-N,3-O-bis[(3R)-3-hydroxytetradecanoyl]-alpha-D-glucosaminyl 1-phosphate + UMP + 2 H(+). It functions in the pathway glycolipid biosynthesis; lipid IV(A) biosynthesis; lipid IV(A) from (3R)-3-hydroxytetradecanoyl-[acyl-carrier-protein] and UDP-N-acetyl-alpha-D-glucosamine: step 4/6. Its function is as follows. Hydrolyzes the pyrophosphate bond of UDP-2,3-diacylglucosamine to yield 2,3-diacylglucosamine 1-phosphate (lipid X) and UMP by catalyzing the attack of water at the alpha-P atom. Involved in the biosynthesis of lipid A, a phosphorylated glycolipid that anchors the lipopolysaccharide to the outer membrane of the cell. This chain is UDP-2,3-diacylglucosamine hydrolase, found in Shewanella sp. (strain ANA-3).